Reading from the N-terminus, the 104-residue chain is Ig lambda-1 chain C region (104 aa).

An Ig-like domain is found at 6–99 (PSVTLFPPSS…EENTVEKSLS (94 aa)). Cys-27 and Cys-85 are joined by a disulfide.

The protein is Ig lambda-1 chain C region of Rattus norvegicus (Rat).